A 382-amino-acid polypeptide reads, in one-letter code: Alcohol dehydrogenase 4 (382 aa).

Positions 40, 72, 99, 100, 139, 140, 148, 150, 161, and 183 each coordinate NAD(+). The Fe(2+) site is built by Asp195, His199, and His264. 2 residues coordinate NAD(+): His268 and His278. His278 serves as a coordination point for Fe(2+).

Belongs to the iron-containing alcohol dehydrogenase family. In terms of assembly, homodimer. Requires Zn(2+) as cofactor. The cofactor is Fe(2+).

It localises to the mitochondrion. It carries out the reaction a primary alcohol + NAD(+) = an aldehyde + NADH + H(+). It catalyses the reaction ethanol + NAD(+) = acetaldehyde + NADH + H(+). Its activity is regulated as follows. Inhibited by EDTA. In terms of biological role, alcohol dehydrogenase specific for ethanol. Acts mainyl as a mitochondrial formaldehyde dehydrogenase and has no effect on ethanol production. Shows drastically reduced activity towards primary alcohols from 4 carbon atoms upward. Isomers of aliphatic alcohol, as well as secondary alcohols and glycerol are not used at all. The role of ADH4 in yeast metabolism is not yet known, but ADH4 is not responsible for the production of ethanol during growth on glucose nor responsible for the oxidation of ethanol to acetaldehyde. This is Alcohol dehydrogenase 4 from Saccharomyces cerevisiae (strain ATCC 204508 / S288c) (Baker's yeast).